A 317-amino-acid chain; its full sequence is Transaldolase 2 (317 aa).

Residue Lys-132 is the Schiff-base intermediate with substrate of the active site.

This sequence belongs to the transaldolase family. Type 1 subfamily. Homodimer.

It is found in the cytoplasm. It catalyses the reaction D-sedoheptulose 7-phosphate + D-glyceraldehyde 3-phosphate = D-erythrose 4-phosphate + beta-D-fructose 6-phosphate. It functions in the pathway carbohydrate degradation; pentose phosphate pathway; D-glyceraldehyde 3-phosphate and beta-D-fructose 6-phosphate from D-ribose 5-phosphate and D-xylulose 5-phosphate (non-oxidative stage): step 2/3. Its function is as follows. Transaldolase is important for the balance of metabolites in the pentose-phosphate pathway. In Pectobacterium atrosepticum (strain SCRI 1043 / ATCC BAA-672) (Erwinia carotovora subsp. atroseptica), this protein is Transaldolase 2.